The sequence spans 407 residues: uncharacterized protein (407 aa).

Transmembrane regions (helical) follow at residues 22-42, 51-71, 101-121, 126-146, 154-174, 179-199, 227-247, 258-278, 286-306, 309-329, 347-367, and 369-389; these read IVSV…PLAV, LGFS…ATLA, ALLL…VLLV, VLGI…IGRV, VISW…PVGV, ALIP…GYYL, GLGL…ITLY, LSLT…ANTI, VAIV…LAPV, VALV…PALG, AYSV…GYVA, and AFGY…GVAL.

Belongs to the major facilitator superfamily. YhhS family.

It localises to the cell inner membrane. This is an uncharacterized protein from Burkholderia pseudomallei (strain 1106a).